A 160-amino-acid polypeptide reads, in one-letter code: Major pollen allergen Bet v 1-E (160 aa).

Lys-55, Tyr-82, Tyr-84, and Asn-101 together coordinate brassinolide.

It belongs to the BetVI family.

It is found in the cytoplasm. In terms of biological role, may be a general steroid carrier protein. The chain is Major pollen allergen Bet v 1-E (BETV1E) from Betula pendula (European white birch).